A 332-amino-acid polypeptide reads, in one-letter code: 3-dehydroquinate synthase (332 aa).

NAD(+) contacts are provided by residues 55–60 (DGEEYK), 89–93 (GVITD), 113–114 (TT), Lys-126, Lys-134, and 152–155 (TLST). Residues Glu-167, His-226, and His-242 each coordinate Zn(2+).

Belongs to the sugar phosphate cyclases superfamily. Dehydroquinate synthase family. The cofactor is NAD(+). It depends on Co(2+) as a cofactor. Requires Zn(2+) as cofactor.

The protein resides in the cytoplasm. The catalysed reaction is 7-phospho-2-dehydro-3-deoxy-D-arabino-heptonate = 3-dehydroquinate + phosphate. It functions in the pathway metabolic intermediate biosynthesis; chorismate biosynthesis; chorismate from D-erythrose 4-phosphate and phosphoenolpyruvate: step 2/7. Catalyzes the conversion of 3-deoxy-D-arabino-heptulosonate 7-phosphate (DAHP) to dehydroquinate (DHQ). This is 3-dehydroquinate synthase from Pyrococcus abyssi (strain GE5 / Orsay).